The chain runs to 229 residues: Cytidylate kinase (229 aa).

12–20 (GPSGAGKGT) serves as a coordination point for ATP.

The protein belongs to the cytidylate kinase family. Type 1 subfamily.

The protein resides in the cytoplasm. The catalysed reaction is CMP + ATP = CDP + ADP. It carries out the reaction dCMP + ATP = dCDP + ADP. In Pseudomonas aeruginosa (strain LESB58), this protein is Cytidylate kinase.